The sequence spans 369 residues: Aminomethyltransferase (369 aa).

The protein belongs to the GcvT family. In terms of assembly, the glycine cleavage system is composed of four proteins: P, T, L and H.

It carries out the reaction N(6)-[(R)-S(8)-aminomethyldihydrolipoyl]-L-lysyl-[protein] + (6S)-5,6,7,8-tetrahydrofolate = N(6)-[(R)-dihydrolipoyl]-L-lysyl-[protein] + (6R)-5,10-methylene-5,6,7,8-tetrahydrofolate + NH4(+). Functionally, the glycine cleavage system catalyzes the degradation of glycine. The polypeptide is Aminomethyltransferase (Synechococcus sp. (strain CC9311)).